A 181-amino-acid chain; its full sequence is Inner membrane-spanning protein YciB (181 aa).

A run of 5 helical transmembrane segments spans residues 10-30 (LVIFFAVYKFFDIYIASGALI), 50-70 (MHLITFAMVTVFGTLTLVFHD), 72-92 (AFIKWKVTIIYALFALALGIS), 118-138 (ITWYWVIFFATCGLVNIYVAF), and 148-168 (FKVFGLTALTLVNTVITVFYL).

It belongs to the YciB family.

The protein localises to the cell inner membrane. Functionally, plays a role in cell envelope biogenesis, maintenance of cell envelope integrity and membrane homeostasis. This is Inner membrane-spanning protein YciB from Shewanella putrefaciens (strain CN-32 / ATCC BAA-453).